The following is a 283-amino-acid chain: Urease accessory protein UreD 1 (283 aa).

It belongs to the UreD family. In terms of assembly, ureD, UreF and UreG form a complex that acts as a GTP-hydrolysis-dependent molecular chaperone, activating the urease apoprotein by helping to assemble the nickel containing metallocenter of UreC. The UreE protein probably delivers the nickel.

Its subcellular location is the cytoplasm. In terms of biological role, required for maturation of urease via the functional incorporation of the urease nickel metallocenter. In Brucella anthropi (strain ATCC 49188 / DSM 6882 / CCUG 24695 / JCM 21032 / LMG 3331 / NBRC 15819 / NCTC 12168 / Alc 37) (Ochrobactrum anthropi), this protein is Urease accessory protein UreD 1.